A 370-amino-acid chain; its full sequence is Putative agmatine deiminase (370 aa).

Cys-361 serves as the catalytic Amidino-cysteine intermediate.

It belongs to the agmatine deiminase family.

The enzyme catalyses agmatine + H2O = N-carbamoylputrescine + NH4(+). The chain is Putative agmatine deiminase from Shewanella baltica (strain OS155 / ATCC BAA-1091).